A 317-amino-acid chain; its full sequence is MTPILDFEKPIVNLKEKIVELKSFTENSEIDLTKEIETLEERLARLEEDIYGNLKPWNRVQMARHPDRPTTMDYIERIFTDFIEFHGDRFYGEDEAIISGIGYYKDSPVTVIGHQRGKDTKENIRRNFGMPHPEGYRKALRHMQQAEKFNRPIITFIDTKGAYPGKAAEERGQSEAIAKNLMEMAGLQVPIICIVIGEGGSGGALGLGVGNHIHMLENSTYSVISPEGAAAILWKDSTQAKKAAETMKITAPDLKELGIIDQVISEPRGGAHRDVDSQAELIDNIIKQSLVELMLLSSEELVDKRWEKYKQMGTFMS.

Residues 38–292 enclose the CoA carboxyltransferase C-terminal domain; the sequence is TLEERLARLE…DNIIKQSLVE (255 aa).

This sequence belongs to the AccA family. As to quaternary structure, acetyl-CoA carboxylase is a heterohexamer composed of biotin carboxyl carrier protein (AccB), biotin carboxylase (AccC) and two subunits each of ACCase subunit alpha (AccA) and ACCase subunit beta (AccD).

It is found in the cytoplasm. It catalyses the reaction N(6)-carboxybiotinyl-L-lysyl-[protein] + acetyl-CoA = N(6)-biotinyl-L-lysyl-[protein] + malonyl-CoA. It functions in the pathway lipid metabolism; malonyl-CoA biosynthesis; malonyl-CoA from acetyl-CoA: step 1/1. In terms of biological role, component of the acetyl coenzyme A carboxylase (ACC) complex. First, biotin carboxylase catalyzes the carboxylation of biotin on its carrier protein (BCCP) and then the CO(2) group is transferred by the carboxyltransferase to acetyl-CoA to form malonyl-CoA. This chain is Acetyl-coenzyme A carboxylase carboxyl transferase subunit alpha, found in Oceanobacillus iheyensis (strain DSM 14371 / CIP 107618 / JCM 11309 / KCTC 3954 / HTE831).